The sequence spans 130 residues: Seminal plasma protein pB1 (130 aa).

A signal peptide spans 1–25 (MAPRLGIFLLWAGVSVFLPLDPVNG). 2 Fibronectin type-II domains span residues 39 to 83 (TSDD…YCRS) and 84 to 130 (TDYA…WRYC). 4 cysteine pairs are disulfide-bonded: C44–C68, C58–C81, C89–C115, and C103–C130.

Belongs to the seminal plasma protein family. Component of seminal plasma.

The protein localises to the secreted. Functionally, may form a complex with spermadhesin AQN-1 which possesses phosphorylcholine-binding activity. The sequence is that of Seminal plasma protein pB1 from Sus scrofa (Pig).